Reading from the N-terminus, the 123-residue chain is Probable U6 snRNA-associated Sm-like protein LSm4 (123 aa).

The region spanning 3–76 (LPLSLLKTAQ…IKYLRIPETV (74 aa)) is the Sm domain. A compositionally biased stretch (basic and acidic residues) spans 85-97 (NEVRRQQQREQSR). The segment at 85-123 (NEVRRQQQREQSRGRGGGRGGRGGHRGGGGNRGGRGGAR) is disordered. Residues 98–123 (GRGGGRGGRGGHRGGGGNRGGRGGAR) are compositionally biased toward gly residues.

Belongs to the snRNP Sm proteins family. In terms of assembly, component of the precatalytic spliceosome (spliceosome B complex). Component of the U4/U6-U5 tri-snRNP complex, a building block of the precatalytic spliceosome (spliceosome B complex). LSM2, LSM3, LSM4, LSM5, LSM6, LSM7 and LSM8 form a heptameric, ring-shaped subcomplex (the LSM2-8 complex) that is part of the U4/U6-U5 tri-snRNP complex and the precatalytic spliceosome.

It localises to the nucleus. In terms of biological role, plays a role in pre-mRNA splicing as component of the U4/U6-U5 tri-snRNP complex that is involved in spliceosome assembly, and as component of the precatalytic spliceosome (spliceosome B complex). The heptameric LSM2-8 complex binds specifically to the 3'-terminal U-tract of U6 snRNA. This is Probable U6 snRNA-associated Sm-like protein LSm4 (lsm-4) from Caenorhabditis elegans.